Reading from the N-terminus, the 787-residue chain is Endonuclease MutS2 (787 aa).

331 to 338 is an ATP binding site; sequence GPNTGGKT. Residues 711–786 form the Smr domain; sequence IDVRGKTSDD…EQGVTVVELK (76 aa).

Belongs to the DNA mismatch repair MutS family. MutS2 subfamily. In terms of assembly, homodimer. Binds to stalled ribosomes, contacting rRNA.

Endonuclease that is involved in the suppression of homologous recombination and thus may have a key role in the control of bacterial genetic diversity. Its function is as follows. Acts as a ribosome collision sensor, splitting the ribosome into its 2 subunits. Detects stalled/collided 70S ribosomes which it binds and splits by an ATP-hydrolysis driven conformational change. Acts upstream of the ribosome quality control system (RQC), a ribosome-associated complex that mediates the extraction of incompletely synthesized nascent chains from stalled ribosomes and their subsequent degradation. Probably generates substrates for RQC. The sequence is that of Endonuclease MutS2 from Caldicellulosiruptor bescii (strain ATCC BAA-1888 / DSM 6725 / KCTC 15123 / Z-1320) (Anaerocellum thermophilum).